The chain runs to 80 residues: DNA-binding protein HU-like (80 aa).

The protein belongs to the bacterial histone-like protein family.

Functionally, histone-like DNA-binding protein which is capable of wrapping DNA to stabilize it, and thus to prevent its denaturation under extreme environmental conditions. This is DNA-binding protein HU-like from Rickettsia rickettsii (strain Sheila Smith).